A 299-amino-acid chain; its full sequence is Ribosomal RNA small subunit methyltransferase H (299 aa).

S-adenosyl-L-methionine-binding positions include 36–38 (GGH), D55, F82, D97, and Q104.

It belongs to the methyltransferase superfamily. RsmH family.

The protein resides in the cytoplasm. It carries out the reaction cytidine(1402) in 16S rRNA + S-adenosyl-L-methionine = N(4)-methylcytidine(1402) in 16S rRNA + S-adenosyl-L-homocysteine + H(+). Specifically methylates the N4 position of cytidine in position 1402 (C1402) of 16S rRNA. The protein is Ribosomal RNA small subunit methyltransferase H of Synechococcus sp. (strain RCC307).